Reading from the N-terminus, the 278-residue chain is S-formylglutathione hydrolase YeiG (278 aa).

Active-site charge relay system residues include S145, D223, and H256.

It belongs to the esterase D family.

It catalyses the reaction S-formylglutathione + H2O = formate + glutathione + H(+). Its function is as follows. Serine hydrolase involved in the detoxification of formaldehyde. Hydrolyzes S-formylglutathione to glutathione and formate. The chain is S-formylglutathione hydrolase YeiG (yeiG) from Escherichia coli (strain UTI89 / UPEC).